The chain runs to 847 residues: Signal transducer and activator of transcription 6 (847 aa).

N-acetylserine is present on Ser-2. The SH2 domain maps to 517–632 (WFDGVLDLTK…EAFRSHYKPE (116 aa)). Phosphotyrosine; by JAK is present on Tyr-641. An LXXLL motif motif is present at residues 802–806 (LTKLL). The segment at 809–847 (GQGESGGGSLGAQPLLQPSHYGQSGISMSHMDLRANPSW) is disordered.

This sequence belongs to the transcription factor STAT family. In terms of assembly, forms a homodimer or a heterodimer with a related family member. Interacts with NCOA1 via its C-terminal LXXLL motif. Tyrosine phosphorylated on Tyr-641 following stimulation by IL4/interleukin-4. Tyrosine phosphorylated following stimulation by IL3/interleukin-3. Dephosphorylation on tyrosine residues by PTPN2 negatively regulates the IL4/interleukin-4 mediated signaling. In terms of processing, mono-ADP-ribosylated by PARP14.

Its subcellular location is the cytoplasm. The protein resides in the nucleus. Carries out a dual function: signal transduction and activation of transcription. Involved in IL4/interleukin-4- and IL3/interleukin-3-mediated signaling. The chain is Signal transducer and activator of transcription 6 (STAT6) from Homo sapiens (Human).